Here is a 403-residue protein sequence, read N- to C-terminus: 3-hydroxy-3-methylglutaryl-coenzyme A reductase (403 aa).

Catalysis depends on charge relay system residues Glu-99 and Asp-303. His-398 (proton donor) is an active-site residue.

The protein belongs to the HMG-CoA reductase family.

It catalyses the reaction (R)-mevalonate + 2 NADP(+) + CoA = (3S)-3-hydroxy-3-methylglutaryl-CoA + 2 NADPH + 2 H(+). It participates in metabolic intermediate biosynthesis; (R)-mevalonate biosynthesis; (R)-mevalonate from acetyl-CoA: step 3/3. Its activity is regulated as follows. Is competitively inhibited by (R)-HMG-CoA and lovastatin (formerly called mevinolin). In terms of biological role, catalyzes the NADPH-dependent reductive deacylation of (S)-3-hydroxy-3-methylglutaryl-CoA (HMG-CoA) to (R)-mevalonate. Functions in the mevalonate (MVA) pathway leading to isopentenyl diphosphate (IPP), a key precursor for the biosynthesis of isoprenoid compounds such as archaeal membrane lipids. Is also able to catalyze the reduction of mevaldehyde to mevalonate and the oxidative acylation of mevaldehyde to HMG-CoA. This is 3-hydroxy-3-methylglutaryl-coenzyme A reductase (hmgA) from Haloferax volcanii (strain ATCC 29605 / DSM 3757 / JCM 8879 / NBRC 14742 / NCIMB 2012 / VKM B-1768 / DS2) (Halobacterium volcanii).